We begin with the raw amino-acid sequence, 2372 residues long: Nonribosomal peptide synthase roqA (2372 aa).

The tract at residues 217–610 (EHCRSQPDAE…VGRKDREVKI (394 aa)) is adenylation 1. The disordered stretch occupies residues 723 to 745 (AASSHSSTREQPSNQRDKEDVEL). Residues 725–736 (SSHSSTREQPSN) show a composition bias toward polar residues. A Carrier 1 domain is found at 750-823 (SAKENTLCSV…KIARCTAESK (74 aa)). Ser-784 is modified (O-(pantetheine 4'-phosphoryl)serine). The interval 856-1122 (EDIYPCTPLQ…FATFPFRTQL (267 aa)) is condensation 1. Residues 1290–1679 (QPNSEAVCAW…VGRKDTQVKL (390 aa)) are adenylation 2. In terms of domain architecture, Carrier 2 spans 1819 to 1895 (KPTTEQERFV…LFCKHVILIQ (77 aa)). At Ser-1856 the chain carries O-(pantetheine 4'-phosphoryl)serine. A condensation 2 region spans residues 1962 to 2227 (TSNYTSTAIF…FNVLPCRIAI (266 aa)).

It participates in alkaloid biosynthesis. Functionally, dipeptide synthase; part of the gene cluster that mediates the biosynthesis of the mycotoxins roquefortine C and meleagrin. The first stage is catalyzed by the dipeptide synthase roqA which condenses histidine and tryptophan to produce histidyltryptophanyldiketopiperazine (HTD). HTD is then converted to roquefortine C through two possible pathways. In the first pathway, prenyltransferase roqD transforms HTD to the intermediate roquefortine D, which is in turn converted to roquefortine C by the cytochrome P450 monooxygenase roqR. In the second pathway, HTD is first converted to the intermediate dehydrohistidyltryptophanyldi-ketopiperazine (DHTD) by roqR which is then prenylated by roqD to form roquefortine C. Roquefortine C can be further transformed to meleagrin via three more reactions including oxydation to glandicolin A by roqM, which is further reduced to glandicoline B by roqO. Finally, glandicoline B is converted to meleagrin by the glandicoline B O-methyltransferase roqN. More studies identified further branching and additional metabolites produced by the roquefortine/meleagrin cluster, including roquefortine F, roquefortine L, roquefortine M, roquefortine N and neoxaline. The chain is Nonribosomal peptide synthase roqA from Penicillium rubens (strain ATCC 28089 / DSM 1075 / NRRL 1951 / Wisconsin 54-1255) (Penicillium chrysogenum).